The following is a 234-amino-acid chain: MTKQVRIVVLTGAGISAESGIRTFRATDGLWENHPVDEVATPEGFARNPKLVQRFYNERRKQLFSDQIAPNAAHFALAELEKKLGDNLLIVTQNVDNLHERAGSKNLIHMHGELLKVRCVKSGKIYDWQGDIGEHDKCLCCTPTQILRPHIVWFGEMPLEMEKIQTALSECDYFISIGTSGNVYPAAGFVREALFYGAHTVELNLEPSQVRSSFDECHYGKATELVPHYLAQFL.

The Deacetylase sirtuin-type domain maps to 1-234 (MTKQVRIVVL…LVPHYLAQFL (234 aa)). 12–31 (GAGISAESGIRTFRATDGLW) contacts NAD(+). 2 residues coordinate substrate: tyrosine 56 and arginine 59. Residue 93–96 (QNVD) coordinates NAD(+). Catalysis depends on histidine 111, which acts as the Proton acceptor. Positions 119 and 138 each coordinate Zn(2+). Residues 178-180 (GTS), 204-206 (NLE), and alanine 222 contribute to the NAD(+) site.

This sequence belongs to the sirtuin family. Class III subfamily. It depends on Zn(2+) as a cofactor.

The protein localises to the cytoplasm. It catalyses the reaction N(6)-acetyl-L-lysyl-[protein] + NAD(+) + H2O = 2''-O-acetyl-ADP-D-ribose + nicotinamide + L-lysyl-[protein]. The enzyme catalyses N(6)-succinyl-L-lysyl-[protein] + NAD(+) + H2O = 2''-O-succinyl-ADP-D-ribose + nicotinamide + L-lysyl-[protein]. Its function is as follows. NAD-dependent lysine deacetylase and desuccinylase that specifically removes acetyl and succinyl groups on target proteins. Modulates the activities of several proteins which are inactive in their acylated form. In Pasteurella multocida (strain Pm70), this protein is NAD-dependent protein deacylase.